Here is a 156-residue protein sequence, read N- to C-terminus: Ribosomal RNA large subunit methyltransferase H (156 aa).

S-adenosyl-L-methionine-binding positions include leucine 73, glycine 104, and 123–128 (LSALTL).

This sequence belongs to the RNA methyltransferase RlmH family. As to quaternary structure, homodimer.

The protein resides in the cytoplasm. The catalysed reaction is pseudouridine(1915) in 23S rRNA + S-adenosyl-L-methionine = N(3)-methylpseudouridine(1915) in 23S rRNA + S-adenosyl-L-homocysteine + H(+). Specifically methylates the pseudouridine at position 1915 (m3Psi1915) in 23S rRNA. This chain is Ribosomal RNA large subunit methyltransferase H, found in Erwinia tasmaniensis (strain DSM 17950 / CFBP 7177 / CIP 109463 / NCPPB 4357 / Et1/99).